The sequence spans 459 residues: Sulfite oxidase (459 aa).

Residues 4 to 83 enclose the Cytochrome b5 heme-binding domain; it reads YPRYTREEVG…LQQYKVGELS (80 aa). Residues His-40, His-65, and His-69 each contribute to the heme b site. Residues 83–115 form a disordered region; sequence SPDEAPAAPDAQDPFAGDPPRHPGLRVNSQKPF. Residues 85-100 are compositionally biased toward low complexity; sequence DEAPAAPDAQDPFAGD. The hinge stretch occupies residues 86 to 95; sequence EAPAAPDAQD. A moco domain region spans residues 96 to 323; it reads PFAGDPPRHP…PSRWQQNDYK (228 aa). Mo-molybdopterin is bound by residues 136 to 140, Cys-185, Asp-244, His-283, Arg-288, and 299 to 301; these read FTRNH and SVK. A homodimerization region spans residues 324–459; it reads GFSPCVDWDT…RGVLSTAWHR (136 aa).

In terms of assembly, homodimer. Requires heme b as cofactor. It depends on Mo-molybdopterin as a cofactor.

The protein localises to the mitochondrion intermembrane space. It carries out the reaction sulfite + O2 + H2O = sulfate + H2O2. It participates in energy metabolism; sulfur metabolism. Its function is as follows. Catalyzes the oxidation of sulfite to sulfate, the terminal reaction in the oxidative degradation of sulfur-containing amino acids. The polypeptide is Sulfite oxidase (SUOX) (Gallus gallus (Chicken)).